Consider the following 422-residue polypeptide: Serine--tRNA ligase (422 aa).

Residue 229 to 231 (TAE) coordinates L-serine. Residue 260–262 (RAE) participates in ATP binding. Glutamate 283 contributes to the L-serine binding site. 347-350 (EISS) serves as a coordination point for ATP. An L-serine-binding site is contributed by serine 383.

Belongs to the class-II aminoacyl-tRNA synthetase family. Type-1 seryl-tRNA synthetase subfamily. As to quaternary structure, homodimer. The tRNA molecule binds across the dimer.

Its subcellular location is the cytoplasm. It catalyses the reaction tRNA(Ser) + L-serine + ATP = L-seryl-tRNA(Ser) + AMP + diphosphate + H(+). The catalysed reaction is tRNA(Sec) + L-serine + ATP = L-seryl-tRNA(Sec) + AMP + diphosphate + H(+). The protein operates within aminoacyl-tRNA biosynthesis; selenocysteinyl-tRNA(Sec) biosynthesis; L-seryl-tRNA(Sec) from L-serine and tRNA(Sec): step 1/1. Functionally, catalyzes the attachment of serine to tRNA(Ser). Is also able to aminoacylate tRNA(Sec) with serine, to form the misacylated tRNA L-seryl-tRNA(Sec), which will be further converted into selenocysteinyl-tRNA(Sec). The polypeptide is Serine--tRNA ligase (Heliobacterium modesticaldum (strain ATCC 51547 / Ice1)).